Consider the following 96-residue polypeptide: Co-chaperonin GroES (96 aa).

It belongs to the GroES chaperonin family. Heptamer of 7 subunits arranged in a ring. Interacts with the chaperonin GroEL.

The protein localises to the cytoplasm. Its function is as follows. Together with the chaperonin GroEL, plays an essential role in assisting protein folding. The GroEL-GroES system forms a nano-cage that allows encapsulation of the non-native substrate proteins and provides a physical environment optimized to promote and accelerate protein folding. GroES binds to the apical surface of the GroEL ring, thereby capping the opening of the GroEL channel. This chain is Co-chaperonin GroES, found in Shewanella loihica (strain ATCC BAA-1088 / PV-4).